Consider the following 128-residue polypeptide: Thor profilin (128 aa).

This sequence belongs to the Asgard profilin family.

It is found in the cytoplasm. Its subcellular location is the cytoskeleton. Has no profilin activity against rabbit actin. This is Thor profilin from Thorarchaeota archaeon (strain AB_25).